Reading from the N-terminus, the 456-residue chain is Major facilitator superfamily domain-containing protein 10 (456 aa).

3 helical membrane-spanning segments follow: residues 25 to 45 (VIIVLFLGLLLDLLAFTLLLP), 87 to 107 (VLFGGLIGSAFSLLQFFSAPL), and 114 to 136 (YLGRRPVMMLSLTGLAISYAVWA). The N-linked (GlcNAc...) asparagine glycan is linked to Asn159. 8 helical membrane passes run 179-199 (AVIGVAFSLAFTLGPMLGAFL), 203-223 (MVPWISLLFAISDMLFIFCFL), 278-298 (LVYFLYLFLFSGLEYTLSFLA), 311-328 (KMFFFIGLTMATIQGTYA), 345-365 (LLLVPAFLLIGWAHSLPTLGL), 366-386 (GLMLYSFAAAVVVPGLSTMVS), 403-423 (SLGALGRALGPVVAASVYWLT), and 424-444 (GAQVCFTVCSALFLLPFLLLW).

It belongs to the major facilitator superfamily. As to expression, esxpressed in luminal membrane of renal tubules. Expressed at the surface of eosinophils (at protein level).

Its subcellular location is the nucleus inner membrane. The protein localises to the cell membrane. In terms of biological role, probable organic anion transporter which may serve as a transporter for some non-steroidal anti-inflammatory drugs (NSAIDs) as well as other organic anions across the luminal membranes of renal proximal tubules at the final excretion step into the urine. This is Major facilitator superfamily domain-containing protein 10 (Mfsd10) from Mus musculus (Mouse).